Consider the following 361-residue polypeptide: Peptide chain release factor 1 (361 aa).

Gln-237 carries the N5-methylglutamine modification.

The protein belongs to the prokaryotic/mitochondrial release factor family. Post-translationally, methylated by PrmC. Methylation increases the termination efficiency of RF1.

Its subcellular location is the cytoplasm. Functionally, peptide chain release factor 1 directs the termination of translation in response to the peptide chain termination codons UAG and UAA. The polypeptide is Peptide chain release factor 1 (Alcanivorax borkumensis (strain ATCC 700651 / DSM 11573 / NCIMB 13689 / SK2)).